We begin with the raw amino-acid sequence, 788 residues long: Leucine-rich repeat and fibronectin type-III domain-containing protein 2 (788 aa).

The signal sequence occupies residues 1–20; it reads METLLGGLLAFGMAFAVVDA. Positions 21-52 constitute an LRRNT domain; the sequence is CPKYCVCQNLSESLGTLCPSKGLLFVPPDIDR. Residues 21-534 lie on the Extracellular side of the membrane; sequence CPKYCVCQNL…MHSQILGGTM (514 aa). 2 N-linked (GlcNAc...) asparagine glycosylation sites follow: asparagine 29 and asparagine 74. LRR repeat units follow at residues 53–74, 77–98, 101–122, 125–146, 150–171, 174–195, and 198–219; these read RTVE…DFAN, GLVD…SFLD, SLRS…TLRG, NLQH…AFED, TLED…SVRR, NLHQ…TFAD, and KLAR…PIFA. Positions 242–288 constitute an LRRCT domain; sequence NPLHCNCELLWLRRLERDDDLKTCGSPGGLKGRYFWHIREEEFVCEP. The Ig-like domain maps to 289–375; the sequence is PLITQHTHKL…GEATATVEVS (87 aa). Cysteine 310 and cysteine 359 are disulfide-bonded. N-linked (GlcNAc...) asparagine glycans are attached at residues asparagine 332, asparagine 341, asparagine 384, and asparagine 457. Residues 383–423 form a disordered region; the sequence is SNSTSRMAPPKSRLSDITGSSKTSRGGGGSGAGEPPKSTPE. The Fibronectin type-III domain maps to 422–518; it reads PERAVLVSDV…GCAQFFTKAD (97 aa). A helical transmembrane segment spans residues 535–555; that stretch reads ILVIGGIIVATLLVFIVILMV. Over 556 to 788 the chain is Cytoplasmic; that stretch reads RYKVCNHDAP…SSEWVMESTV (233 aa). Over residues 620 to 641 the composition is skewed to low complexity; that stretch reads CDSSSSSSLGSGEAAGLSRGPW. Disordered stretches follow at residues 620-655 and 668-707; these read CDSS…PSLD and SQRK…ATRA. The span at 642–651 shows a compositional bias: pro residues; it reads RLPPPAPRPK. Positions 785-788 match the PDZ-binding motif; it reads ESTV.

Belongs to the LRFN family. Forms heteromeric complexes with LRFN1, LRFN3 and LRFN4. Can form homomeric complexes, but not across cell junctions. Can form heteromeric complexes with LRFN5. Interacts with DLG1, DLG3 and DLG4; interaction with DLG4 is mediated by the PDZ-binding domain. Also interacts with DLG2. Interacts with 2 NMDA receptor subunits GRIN1 and GRIN2A.

The protein localises to the membrane. Its subcellular location is the synapse. It is found in the postsynaptic cell membrane. Functionally, promotes neurite outgrowth in hippocampal neurons. Enhances the cell surface expression of GRIN1 and GRIN2A NMDA receptor subunits. May play a role in redistributing DLG4 to the cell periphery. In Rattus norvegicus (Rat), this protein is Leucine-rich repeat and fibronectin type-III domain-containing protein 2 (Lrfn2).